A 145-amino-acid chain; its full sequence is Large ribosomal subunit protein uL15 (145 aa).

Residues 20–54 (GRGMASGKGKTATRGHKGQNSRSGGGVRPGFEGGQ) are disordered. The span at 42–52 (SGGGVRPGFEG) shows a compositional bias: gly residues.

This sequence belongs to the universal ribosomal protein uL15 family. As to quaternary structure, part of the 50S ribosomal subunit.

In terms of biological role, binds to the 23S rRNA. The sequence is that of Large ribosomal subunit protein uL15 from Mycoplasma mycoides subsp. mycoides SC (strain CCUG 32753 / NCTC 10114 / PG1).